A 96-amino-acid polypeptide reads, in one-letter code: UPF0235 protein Tola_0962 (96 aa).

The protein belongs to the UPF0235 family.

This is UPF0235 protein Tola_0962 from Tolumonas auensis (strain DSM 9187 / NBRC 110442 / TA 4).